Reading from the N-terminus, the 820-residue chain is Trimethylamine-N-oxide reductase (820 aa).

A signal peptide (tat-type signal) is located at residues 1–33; the sequence is MAITRRSFLKGVATTSAASVIGPSLLASASANA. Residue serine 179 participates in Mo-bis(molybdopterin guanine dinucleotide) binding.

It belongs to the prokaryotic molybdopterin-containing oxidoreductase family. Mo-bis(molybdopterin guanine dinucleotide) is required as a cofactor. In terms of processing, predicted to be exported by the Tat system. The position of the signal peptide cleavage has not been experimentally proven.

It localises to the periplasm. The catalysed reaction is trimethylamine + 2 Fe(III)-[cytochrome c] + H2O = trimethylamine N-oxide + 2 Fe(II)-[cytochrome c] + 3 H(+). In terms of biological role, reduces trimethylamine-N-oxide (TMAO) into trimethylamine; an anaerobic reaction coupled to energy-yielding reactions. This chain is Trimethylamine-N-oxide reductase (torA), found in Vibrio vulnificus (strain CMCP6).